Reading from the N-terminus, the 124-residue chain is UPF0102 protein Noc_0355 (124 aa).

This sequence belongs to the UPF0102 family.

This Nitrosococcus oceani (strain ATCC 19707 / BCRC 17464 / JCM 30415 / NCIMB 11848 / C-107) protein is UPF0102 protein Noc_0355.